Reading from the N-terminus, the 62-residue chain is Sperm protamine P1 (62 aa).

The tract at residues M1–Y62 is disordered.

It belongs to the protamine P1 family. Testis.

The protein resides in the nucleus. Its subcellular location is the chromosome. Its function is as follows. Protamines substitute for histones in the chromatin of sperm during the haploid phase of spermatogenesis. They compact sperm DNA into a highly condensed, stable and inactive complex. This chain is Sperm protamine P1 (PRM1), found in Neophascogale lorentzii (Long-clawed marsupial mouse).